The primary structure comprises 190 residues: UPF0301 protein Rpic_0619 (190 aa).

Belongs to the UPF0301 (AlgH) family.

This Ralstonia pickettii (strain 12J) protein is UPF0301 protein Rpic_0619.